Reading from the N-terminus, the 406-residue chain is Exodeoxyribonuclease 7 large subunit (406 aa).

The protein belongs to the XseA family. Heterooligomer composed of large and small subunits.

The protein localises to the cytoplasm. The enzyme catalyses Exonucleolytic cleavage in either 5'- to 3'- or 3'- to 5'-direction to yield nucleoside 5'-phosphates.. Bidirectionally degrades single-stranded DNA into large acid-insoluble oligonucleotides, which are then degraded further into small acid-soluble oligonucleotides. In Thermobifida fusca (strain YX), this protein is Exodeoxyribonuclease 7 large subunit.